The primary structure comprises 500 residues: Coiled-coil domain-containing protein 125 (500 aa).

Positions 1–105 are disordered; it reads MSKVPRSSSE…TDSNSELSDE (105 aa). Residues 10–23 are compositionally biased toward acidic residues; it reads EAEDIWETEDDMTE. The segment covering 92–101 has biased composition (polar residues); the sequence is RLSSTDSNSE. 2 coiled-coil regions span residues 101-237 and 286-314; these read ELSD…LEAL and STRK…TADA. Ser-492 carries the post-translational modification Phosphoserine.

In terms of tissue distribution, expressed in many tissues, with highest levels in spleen, thymus and bone marrow.

It localises to the cytoplasm. In terms of biological role, may be involved in the regulation of cell migration. The sequence is that of Coiled-coil domain-containing protein 125 (Ccdc125) from Mus musculus (Mouse).